Reading from the N-terminus, the 261-residue chain is Phosphoadenosine phosphosulfate reductase (261 aa).

It belongs to the PAPS reductase family. CysH subfamily.

The enzyme catalyses [thioredoxin]-disulfide + sulfite + adenosine 3',5'-bisphosphate + 2 H(+) = [thioredoxin]-dithiol + 3'-phosphoadenylyl sulfate. Its pathway is sulfur metabolism; hydrogen sulfide biosynthesis; sulfite from sulfate: step 3/3. Its function is as follows. The NADP dependent reduction of PAPS into sulfite involves thioredoxin which probably plays the role of a thiol carrier. This Saccharomyces cerevisiae (strain ATCC 204508 / S288c) (Baker's yeast) protein is Phosphoadenosine phosphosulfate reductase (MET16).